A 505-amino-acid polypeptide reads, in one-letter code: Chemotaxis regulatory protein ChePep (505 aa).

Disordered regions lie at residues glutamate 154–proline 403 and glutamate 420–leucine 465. 5 stretches are compositionally biased toward basic and acidic residues: residues glutamate 172–glutamine 263, glutamate 289–threonine 311, glutamine 337–isoleucine 346, glutamine 359–threonine 373, and proline 386–serine 398. Residues threonine 440 to threonine 451 show a composition bias toward low complexity.

In terms of assembly, interacts with CheZ; the interaction is essential for each other polar localization.

The protein resides in the cytoplasm. In terms of biological role, plays an essential role in chemotaxis. Regulates flagellar rotation through the formation of a complex with chemotaxis protein CheZ. Plays a major role in colonization of the stomach. The chain is Chemotaxis regulatory protein ChePep from Helicobacter pylori (strain ATCC 700392 / 26695) (Campylobacter pylori).